Consider the following 342-residue polypeptide: Pre-mRNA-splicing factor 18 (342 aa).

The residue at position 1 (M1) is an N-acetylmethionine.

This sequence belongs to the PRP18 family. As to quaternary structure, heterodimer with PPIH. Interacts with PRPF4 and with the spliceosome. Part of a complex containing U4/U6 snRNPs.

Its subcellular location is the nucleus speckle. Its function is as follows. Participates in the second step of pre-mRNA splicing. This chain is Pre-mRNA-splicing factor 18 (PRPF18), found in Pongo abelii (Sumatran orangutan).